The following is a 100-amino-acid chain: Replication restart protein PriB (100 aa).

The SSB domain maps to Met1–Ile100.

This sequence belongs to the PriB family. Homodimer. Interacts with PriA and DnaT. Component of the replication restart primosome. Primosome assembly occurs via a 'hand-off' mechanism. PriA binds to replication forks, subsequently PriB then DnaT bind; DnaT then displaces ssDNA to generate the helicase loading substrate.

In terms of biological role, involved in the restart of stalled replication forks, which reloads the replicative helicase on sites other than the origin of replication; the PriA-PriB pathway is the major replication restart pathway. During primosome assembly it facilitates complex formation between PriA and DnaT on DNA; stabilizes PriA on DNA. Stimulates the DNA unwinding activity of PriA helicase. The protein is Replication restart protein PriB of Vibrio cholerae serotype O1 (strain ATCC 39315 / El Tor Inaba N16961).